Here is a 592-residue protein sequence, read N- to C-terminus: Medium-chain-fatty-acid--[acyl-carrier-protein] ligase JamA (592 aa).

The protein belongs to the ATP-dependent AMP-binding enzyme family.

The catalysed reaction is a medium-chain fatty acid + holo-[ACP] + ATP = a medium-chain fatty acyl-[ACP] + AMP + diphosphate. It carries out the reaction a medium-chain fatty acid + ATP + H(+) = a medium-chain fatty acyl-AMP + diphosphate. The enzyme catalyses a medium-chain fatty acyl-AMP + holo-[ACP] = a medium-chain fatty acyl-[ACP] + AMP + H(+). In terms of biological role, ligase involved in the biosynthesis of jamaicamides, which show sodium channel blocking activity and fish toxicity. Initiates jamaicamide biosynthesis by the activation of the starter unit, 5-hexenoic acid, followed by the loading of the activated 5-hexenoic acid onto the acyl carrier protein JamC. In vitro, can also use 5-hexynoic acid, heptanoic acid, butanoic acid, hexanoic acid and benzoic acid. The polypeptide is Medium-chain-fatty-acid--[acyl-carrier-protein] ligase JamA (Moorena producens (strain JHB)).